The following is a 317-amino-acid chain: Regulator of microtubule dynamics protein 1 (317 aa).

The residue at position 168 (K168) is an N6-succinyllysine. 2 TPR repeats span residues 171 to 207 and 225 to 261; these read AICIGDVGDYEGIKAKIANAYIIKEHFEKAIELNPKD and PWYQRRIAKVLFATPPGSTYEEALGYFHRAEQVDPNF.

The protein belongs to the RMDN family. In terms of assembly, interacts with microtubules.

It localises to the cytoplasm. Its subcellular location is the cytoskeleton. It is found in the spindle. The protein localises to the spindle pole. The protein is Regulator of microtubule dynamics protein 1 (RMDN1) of Bos taurus (Bovine).